Here is a 266-residue protein sequence, read N- to C-terminus: 3-methyl-2-oxobutanoate hydroxymethyltransferase (266 aa).

The Mg(2+) site is built by aspartate 45 and aspartate 84. Residues 45–46, aspartate 84, and lysine 112 each bind 3-methyl-2-oxobutanoate; that span reads DS. Glutamate 114 serves as a coordination point for Mg(2+). The Proton acceptor role is filled by glutamate 181.

This sequence belongs to the PanB family. Homodecamer; pentamer of dimers. It depends on Mg(2+) as a cofactor.

The protein localises to the cytoplasm. It catalyses the reaction 3-methyl-2-oxobutanoate + (6R)-5,10-methylene-5,6,7,8-tetrahydrofolate + H2O = 2-dehydropantoate + (6S)-5,6,7,8-tetrahydrofolate. Its pathway is cofactor biosynthesis; (R)-pantothenate biosynthesis; (R)-pantoate from 3-methyl-2-oxobutanoate: step 1/2. Its function is as follows. Catalyzes the reversible reaction in which hydroxymethyl group from 5,10-methylenetetrahydrofolate is transferred onto alpha-ketoisovalerate to form ketopantoate. The sequence is that of 3-methyl-2-oxobutanoate hydroxymethyltransferase from Pseudomonas fluorescens (strain SBW25).